A 269-amino-acid chain; its full sequence is NAD kinase (269 aa).

The active-site Proton acceptor is the Asp45. Residues 45–46 (DG), 121–122 (NE), Arg147, Asp149, 160–165 (TAYNRS), and Ala184 contribute to the NAD(+) site.

The protein belongs to the NAD kinase family. It depends on a divalent metal cation as a cofactor.

The protein resides in the cytoplasm. The enzyme catalyses NAD(+) + ATP = ADP + NADP(+) + H(+). In terms of biological role, involved in the regulation of the intracellular balance of NAD and NADP, and is a key enzyme in the biosynthesis of NADP. Catalyzes specifically the phosphorylation on 2'-hydroxyl of the adenosine moiety of NAD to yield NADP. The polypeptide is NAD kinase (Pediococcus pentosaceus (strain ATCC 25745 / CCUG 21536 / LMG 10740 / 183-1w)).